Consider the following 337-residue polypeptide: Acetyl-coenzyme A synthetase (337 aa).

Residues Arg-131 to Arg-134, Thr-249, and Asn-273 contribute to the CoA site. Gly-325–Pro-327 contacts ATP.

This sequence belongs to the ATP-dependent AMP-binding enzyme family. Mg(2+) is required as a cofactor. Post-translationally, acetylated. Deacetylation by the SIR2-homolog deacetylase activates the enzyme.

It carries out the reaction acetate + ATP + CoA = acetyl-CoA + AMP + diphosphate. Functionally, catalyzes the conversion of acetate into acetyl-CoA (AcCoA), an essential intermediate at the junction of anabolic and catabolic pathways. AcsA undergoes a two-step reaction. In the first half reaction, AcsA combines acetate with ATP to form acetyl-adenylate (AcAMP) intermediate. In the second half reaction, it can then transfer the acetyl group from AcAMP to the sulfhydryl group of CoA, forming the product AcCoA. The sequence is that of Acetyl-coenzyme A synthetase (acsA) from Nostoc linckia.